Reading from the N-terminus, the 344-residue chain is Beta-hexosaminidase (344 aa).

Substrate is bound by residues aspartate 60, arginine 68, arginine 132, and 162–163 (KH). Histidine 175 acts as the Proton donor/acceptor in catalysis. Aspartate 247 acts as the Nucleophile in catalysis.

The protein belongs to the glycosyl hydrolase 3 family. NagZ subfamily.

It is found in the cytoplasm. It catalyses the reaction Hydrolysis of terminal non-reducing N-acetyl-D-hexosamine residues in N-acetyl-beta-D-hexosaminides.. The protein operates within cell wall biogenesis; peptidoglycan recycling. In terms of biological role, plays a role in peptidoglycan recycling by cleaving the terminal beta-1,4-linked N-acetylglucosamine (GlcNAc) from peptide-linked peptidoglycan fragments, giving rise to free GlcNAc, anhydro-N-acetylmuramic acid and anhydro-N-acetylmuramic acid-linked peptides. This Haemophilus ducreyi (strain 35000HP / ATCC 700724) protein is Beta-hexosaminidase.